Here is a 452-residue protein sequence, read N- to C-terminus: MPSVLENILKDKLLEVAVLKKNHALPINIAPSDRDFKKALLEKKTSFILEYKKASPSKGLIRKDFDLLEITKTYEKFASCVSVLADSKYFLGSYENIKIVSQHSTKPILCKDFIIDAFQIKLARVMGSNAVLLMLSVLDDKNYLELFNLAKSLNMSVLTEVSNQQEIERLLKLQYDIIGINNRDLHTLKTDIFHTLELRPLLPKDAIIISESGIYSHAQIKALAPCVNGFLVGSSLMKEKDLKKACIKLILGENKVCGLTRIKDAKAVYKNHFIYGGLIFEKSSPRYIKPKEALKITKAVKKLDFVGVFVKDKIKKIAKIAKKLDLKAVQLYGYSQKEIAQLKKSLPKTCAIWQVVSVADSKDLAPKTKEASLILYDTKGDKMGGNGVSFDWEILENAKTPFMLAGGLNLDNIQKALKIKALGLDFNSGLEISPGIKNKDKIKQLARILREY.

An indole-3-glycerol phosphate synthase region spans residues 1-253 (MPSVLENILK…KACIKLILGE (253 aa)). The interval 254–448 (NKVCGLTRIK…KDKIKQLARI (195 aa)) is N-(5'-phosphoribosyl)anthranilate isomerase.

This sequence in the N-terminal section; belongs to the TrpC family. It in the C-terminal section; belongs to the TrpF family.

The enzyme catalyses N-(5-phospho-beta-D-ribosyl)anthranilate = 1-(2-carboxyphenylamino)-1-deoxy-D-ribulose 5-phosphate. It catalyses the reaction 1-(2-carboxyphenylamino)-1-deoxy-D-ribulose 5-phosphate + H(+) = (1S,2R)-1-C-(indol-3-yl)glycerol 3-phosphate + CO2 + H2O. It participates in amino-acid biosynthesis; L-tryptophan biosynthesis; L-tryptophan from chorismate: step 3/5. It functions in the pathway amino-acid biosynthesis; L-tryptophan biosynthesis; L-tryptophan from chorismate: step 4/5. Its function is as follows. Bifunctional enzyme that catalyzes two sequential steps of tryptophan biosynthetic pathway. The first reaction is catalyzed by the isomerase, coded by the TrpF domain; the second reaction is catalyzed by the synthase, coded by the TrpC domain. In Helicobacter pylori (strain J99 / ATCC 700824) (Campylobacter pylori J99), this protein is Tryptophan biosynthesis protein TrpCF (trpC).